The chain runs to 205 residues: Anaerobic dimethyl sulfoxide reductase chain B (205 aa).

4Fe-4S ferredoxin-type domains lie at 5–33 (YGFF…LTPE), 59–89 (FAYY…KRED), and 90–119 (GFVV…YNET). The [4Fe-4S] cluster site is built by Cys14, Cys17, Cys20, Cys24, Cys67, Cys70, Cys75, Cys79, Cys99, Cys102, Cys105, Cys109, Cys126, Cys129, Cys141, and Cys145. Residues 184-205 (KPNANSRPTGDTTGYLANPKEV) form a disordered region. Positions 186-195 (NANSRPTGDT) are enriched in polar residues.

Heterotrimeric enzyme composed of a catalytic heterodimer (DmsAB) and a membrane anchor protein (DmsC). [4Fe-4S] cluster serves as cofactor.

Electron transfer subunit of the terminal reductase during anaerobic growth on various sulfoxide and N-oxide compounds. This is Anaerobic dimethyl sulfoxide reductase chain B (dmsB) from Shigella flexneri.